Here is a 339-residue protein sequence, read N- to C-terminus: tRNA pseudouridine synthase D (339 aa).

Residue Asp-80 is the Nucleophile of the active site. One can recognise a TRUD domain in the interval 155–311 (GFPNYFTEQR…AKGFSWAFEP (157 aa)).

Belongs to the pseudouridine synthase TruD family.

It catalyses the reaction uridine(13) in tRNA = pseudouridine(13) in tRNA. In terms of biological role, responsible for synthesis of pseudouridine from uracil-13 in transfer RNAs. This Haemophilus influenzae (strain 86-028NP) protein is tRNA pseudouridine synthase D.